An 882-amino-acid polypeptide reads, in one-letter code: Alanine--tRNA ligase (882 aa).

Residues His-570, His-574, Cys-672, and His-676 each coordinate Zn(2+).

It belongs to the class-II aminoacyl-tRNA synthetase family. The cofactor is Zn(2+).

The protein resides in the cytoplasm. The enzyme catalyses tRNA(Ala) + L-alanine + ATP = L-alanyl-tRNA(Ala) + AMP + diphosphate. Functionally, catalyzes the attachment of alanine to tRNA(Ala) in a two-step reaction: alanine is first activated by ATP to form Ala-AMP and then transferred to the acceptor end of tRNA(Ala). Also edits incorrectly charged Ser-tRNA(Ala) and Gly-tRNA(Ala) via its editing domain. The polypeptide is Alanine--tRNA ligase (Xanthomonas axonopodis pv. citri (strain 306)).